A 171-amino-acid polypeptide reads, in one-letter code: NADH-quinone oxidoreductase subunit B 1 (171 aa).

[4Fe-4S] cluster contacts are provided by Cys-44, Cys-45, Cys-110, and Cys-139.

This sequence belongs to the complex I 20 kDa subunit family. NDH-1 is composed of 14 different subunits. Subunits NuoB, C, D, E, F, and G constitute the peripheral sector of the complex. The cofactor is [4Fe-4S] cluster.

Its subcellular location is the cell inner membrane. It carries out the reaction a quinone + NADH + 5 H(+)(in) = a quinol + NAD(+) + 4 H(+)(out). NDH-1 shuttles electrons from NADH, via FMN and iron-sulfur (Fe-S) centers, to quinones in the respiratory chain. The immediate electron acceptor for the enzyme in this species is believed to be ubiquinone. Couples the redox reaction to proton translocation (for every two electrons transferred, four hydrogen ions are translocated across the cytoplasmic membrane), and thus conserves the redox energy in a proton gradient. The polypeptide is NADH-quinone oxidoreductase subunit B 1 (Opitutus terrae (strain DSM 11246 / JCM 15787 / PB90-1)).